The following is a 281-amino-acid chain: Small ribosomal subunit protein uS2 (281 aa).

A disordered region spans residues 225 to 281; it reads LMERKAEKPEEEETEEAAPRRERRARSGARRSRQNENEATAEAATEVAEAPEAEEAE. Over residues 245–256 the composition is skewed to basic residues; that stretch reads RERRARSGARRS. The span at 262 to 272 shows a compositional bias: low complexity; sequence EATAEAATEVA.

Belongs to the universal ribosomal protein uS2 family.

The polypeptide is Small ribosomal subunit protein uS2 (Porphyromonas gingivalis (strain ATCC 33277 / DSM 20709 / CIP 103683 / JCM 12257 / NCTC 11834 / 2561)).